Here is a 584-residue protein sequence, read N- to C-terminus: Pescadillo homolog (584 aa).

Residues 1–54 (MGGLEKKKYERGSATNYITRNKARKKLQLSLPDFRRLCILKGIYPHEPKHKKKV) are required for 28S ribosomal RNA processing. The tract at residues 1 to 257 (MGGLEKKKYE…PKLEGQAQAE (257 aa)) is sufficient for nucleolar localization. Residue Lys-98 is modified to N6-acetyllysine. A sufficient for interaction with MAP1B region spans residues 312–414 (RKKELEAQEK…LLLPVAEYFP (103 aa)). In terms of domain architecture, BRCT spans 321 to 414 (KHKKLFEGLK…LLLPVAEYFP (94 aa)). The interval 449–510 (DPGHLEEEEE…EEKKPQVMAG (62 aa)) is disordered. Over residues 454–489 (EEEEEEDEDDDNEGDVAAENEEEDVEVESEEEEEEE) the composition is skewed to acidic residues. The segment covering 496–505 (EQHRLEEKKP) has biased composition (basic and acidic residues). Lys-513 participates in a covalent cross-link: Glycyl lysine isopeptide (Lys-Gly) (interchain with G-Cter in SUMO1); alternate. Lys-513 is covalently cross-linked (Glycyl lysine isopeptide (Lys-Gly) (interchain with G-Cter in SUMO2); alternate). The tract at residues 535-584 (MMKKREKYLYQKIMFGKRRKIREANKLAEKRKAHDDAVRSEKKAKRTRPV) is required for 28S ribosomal RNA processing. The span at 560-575 (KLAEKRKAHDDAVRSE) shows a compositional bias: basic and acidic residues. Positions 560 to 584 (KLAEKRKAHDDAVRSEKKAKRTRPV) are disordered.

Belongs to the pescadillo family. Component of the PeBoW complex, composed of BOP1, PES1 and WDR12. The complex is held together by BOP1, which interacts with PES1 via its N-terminal domain and with WDR12 via a high-affinity interaction between the seven-bladed beta-propeller domains of the 2 proteins. The PeBoW complex associates with the 66S pre-ribosome. The PeBoW complex also associates with DDX27, PES1 interacts directly with DDX27. Interacts with IRS1 and UBTF. May interact with MAP1B. Sumoylated. Ubiquitous. Highest levels appear to be found in tissues that contain a population of proliferating cells, such as ovary and testis. Also appears to be highly expressed in kidney and liver. In the brain expression is restricted to neural progenitor cells and postmitotic neurons. Highly expressed in malignant astrocytes.

It is found in the nucleus. Its subcellular location is the nucleolus. The protein localises to the nucleoplasm. It localises to the chromosome. Component of the PeBoW complex, which is required for maturation of 28S and 5.8S ribosomal RNAs and formation of the 60S ribosome. The sequence is that of Pescadillo homolog (Pes1) from Mus musculus (Mouse).